The sequence spans 121 residues: Protein TusC (121 aa).

Belongs to the DsrF/TusC family. As to quaternary structure, heterohexamer, formed by a dimer of trimers. The hexameric TusBCD complex contains 2 copies each of TusB, TusC and TusD. The TusBCD complex interacts with TusE.

It is found in the cytoplasm. Functionally, part of a sulfur-relay system required for 2-thiolation of 5-methylaminomethyl-2-thiouridine (mnm(5)s(2)U) at tRNA wobble positions. This is Protein TusC from Yersinia enterocolitica serotype O:8 / biotype 1B (strain NCTC 13174 / 8081).